A 336-amino-acid chain; its full sequence is MADTAPQLKRKREQEAEEAETPSTEEKEAGVGNGTSAPVRLPFSGFRVQKVLRESARDKIIFLHGKVNEDSGDTHGEDAVVILEKTPFQVEHVAQLLTGNPELKLQFSNDIYSTYNLFPPRHLSDIKTTVVYPASEKHLQKYMRQDLRLIRETGDDYRSLTLPYLESQSLSIQWVYNILDKKAEADRIVFENPDPSDGFVLIPDLKWNQQQLDDLYLIAICHRRGIRSLRDLTPEHLPLLRNILREGQEAILKRYQVTGDRLRVYLHYLPSYYHLHVHFTALGFEAPGSGVERAHLLAEVIENLECDPKHYQRRTLTFALRTDDPLLQLLQKAQQP.

The disordered stretch occupies residues 1–36 (MADTAPQLKRKREQEAEEAETPSTEEKEAGVGNGTS). Alanine 2 carries the post-translational modification N-acetylalanine. The short motif at 9-12 (KRKR) is the nuclear localization signal (NLS) element. Residue serine 23 is modified to Phosphoserine. N6-acetyllysine occurs at positions 137 and 141. A nuclear export sequence (NES) motif is present at residues 141-153 (KYMRQDLRLIRET). Substrate-binding positions include tryptophan 174, glutamate 184, aspartate 204, lysine 206, and 267-278 (HYLPSYYHLHVH). Residues 274–278 (HLHVH) carry the Histidine triad motif motif. Residue histidine 276 is the Nucleophile of the active site.

It belongs to the HIT family. In terms of assembly, homodimer. Associates with components of the exosome multienzyme ribonuclease complex, such as EXOSC3 and EXOSC4. Interacts with NDOR1.

The protein resides in the cytoplasm. Its subcellular location is the nucleus. The catalysed reaction is a 5'-end (N(7)-methyl 5'-triphosphoguanosine)-ribonucleoside in mRNA + H2O = N(7)-methyl-GMP + a 5'-end diphospho-ribonucleoside in mRNA + 2 H(+). With respect to regulation, the hydrolytic product 7-methylguanosine diphosphate (m7GDP) efficiently inhibits the decapping scavenger activity and acts as a competitive inhibitor in vitro. Inhibited by 2,4-diaminoquinazoline. Decapping scavenger enzyme that catalyzes the cleavage of a residual cap structure following the degradation of mRNAs by the 3'-&gt;5' exosome-mediated mRNA decay pathway. Hydrolyzes cap analog structures like 7-methylguanosine nucleoside triphosphate (m7GpppG) with up to 10 nucleotide substrates (small capped oligoribonucleotides) and specifically releases 5'-phosphorylated RNA fragments and 7-methylguanosine monophosphate (m7GMP). Cleaves cap analog structures like tri-methyl guanosine nucleoside triphosphate (m3(2,2,7)GpppG) with very poor efficiency. Does not hydrolyze unmethylated cap analog (GpppG) and shows no decapping activity on intact m7GpppG-capped mRNA molecules longer than 25 nucleotides. Does not hydrolyze 7-methylguanosine diphosphate (m7GDP) to m7GMP. May also play a role in the 5'-&gt;3 mRNA decay pathway; m7GDP, the downstream product released by the 5'-&gt;3' mRNA mediated decapping activity, may be also converted by DCPS to m7GMP. Binds to m7GpppG and strongly to m7GDP. Plays a role in first intron splicing of pre-mRNAs. Inhibits activation-induced cell death. In Rattus norvegicus (Rat), this protein is m7GpppX diphosphatase (Dcps).